A 306-amino-acid polypeptide reads, in one-letter code: Glutathione transport system permease protein GsiC (306 aa).

At 1-8 the chain is on the cytoplasmic side; sequence MLNYFIKR. The helical transmembrane segment at 9–29 threads the bilayer; it reads LLGLIPTLLIVMVLVFLFVHL. The Periplasmic portion of the chain corresponds to 30–98; the sequence is LPGDPARLAA…QEIALRFMPT (69 aa). One can recognise an ABC transmembrane type-1 domain in the interval 95 to 292; that stretch reads FMPTFWLTVC…LEFILINLLV (198 aa). A helical transmembrane segment spans residues 99 to 119; that stretch reads FWLTVCSMAWAVIFGMAIGIV. Topologically, residues 120 to 130 are cytoplasmic; sequence SAVWRNGWPDR. A helical membrane pass occupies residues 131 to 151; sequence IGMTLAVSGLSFPAFALGMLL. Residues 152–168 lie on the Periplasmic side of the membrane; the sequence is MQIFSVELGWLPTVGAD. Residues 169 to 189 traverse the membrane as a helical segment; it reads TWLHYILPSLTLGAAVAAVMA. At 190-228 the chain is on the cytoplasmic side; the sequence is RFTRASFVDVLQEDYMRTARAKGVRESLVVLKHGLRNAL. The chain crosses the membrane as a helical span at residues 229–249; the sequence is IPVVTMMGLQFGFLLGGSIVV. At 250-278 the chain is on the periplasmic side; it reads EKVFNWPGLGRLLVDSVEMRDYPVIQAEV. A helical transmembrane segment spans residues 279-299; the sequence is LLFSLEFILINLLVDMLYAAI. The Cytoplasmic portion of the chain corresponds to 300 to 306; that stretch reads NPAIRYK.

It belongs to the binding-protein-dependent transport system permease family. In terms of assembly, the complex is composed of two ATP-binding proteins (GsiA), two transmembrane proteins (GsiC and GsiD) and a solute-binding protein (GsiB).

It is found in the cell inner membrane. In terms of biological role, part of the ABC transporter complex GsiABCD involved in glutathione import. Probably responsible for the translocation of the substrate across the membrane. This is Glutathione transport system permease protein GsiC from Pectobacterium atrosepticum (strain SCRI 1043 / ATCC BAA-672) (Erwinia carotovora subsp. atroseptica).